The primary structure comprises 252 residues: uncharacterized protein (252 aa).

Gly28 to Ser35 contributes to the ATP binding site.

It to E.coli YghS and YghT.

This is an uncharacterized protein from Escherichia coli O6:H1 (strain CFT073 / ATCC 700928 / UPEC).